Consider the following 267-residue polypeptide: Chorismate mutase (267 aa).

The 256-residue stretch at L7–K262 folds into the Chorismate mutase domain. L-tyrosine-binding residues include R77, R78, N145, G147, S148, and T151. L-tryptophan-binding residues include N145, G147, and S148.

Homodimer.

Its subcellular location is the cytoplasm. It catalyses the reaction chorismate = prephenate. It participates in metabolic intermediate biosynthesis; prephenate biosynthesis; prephenate from chorismate: step 1/1. Each dimer has two allosteric binding sites that can bind the regulatory effectors tryptophan or tyrosine. Can bind either one tryptophan or one tyrosine, two tryptophan or two tyrosine or one tryptophan and one tyrosine, which differentially affect the catalytic activity. Activated by tryptophan and subject to feedback inhibition by tyrosine. In the presence of both tryptophan and tyrosine, the enzyme is in the activated state. Its function is as follows. Catalyzes the Claisen rearrangement of chorismate to prephenate. Acts at the first branch point in the aromatic amino acid pathway where it steers biosynthesis towards phenylalanine and tyrosine, and away from tryptophan. This chain is Chorismate mutase, found in Emericella nidulans (strain FGSC A4 / ATCC 38163 / CBS 112.46 / NRRL 194 / M139) (Aspergillus nidulans).